Reading from the N-terminus, the 229-residue chain is PKHD-type hydroxylase OCAR_6723/OCA5_c13470 (229 aa).

The Fe2OG dioxygenase domain occupies 78–180; the sequence is HIFPPLFNRY…RVASFFWLQS (103 aa). Fe cation-binding residues include His-98, Asp-100, and His-161. Arg-171 contributes to the 2-oxoglutarate binding site.

Fe(2+) is required as a cofactor. L-ascorbate serves as cofactor.

This Afipia carboxidovorans (strain ATCC 49405 / DSM 1227 / KCTC 32145 / OM5) (Oligotropha carboxidovorans) protein is PKHD-type hydroxylase OCAR_6723/OCA5_c13470.